The following is a 230-amino-acid chain: MLTSKDFRDQAINLIKKWNNIIDEIPWQWNQINELNNESKGYFTTKRYHKINNNNNNNNNNNIENKNNNNIENFEEIKETIDDSSTTIIKSNNNNNENNIIIFQFDIIYSKSYQVPVLYLNGFSSFDSSPLSWNEIWNNLPLSNLDKNQQSTIPYITQVEHPILGNPCYQLHPCETDNLMKLILLKEKDYNDNNDKKEYFKDYYLLSWLSIIGPMVNIKIPFDLLKNNNI.

The active-site Glycyl thioester intermediate is cysteine 174.

The protein belongs to the ATG10 family.

It localises to the cytoplasm. In terms of biological role, E2-like enzyme involved in autophagy. Acts as an E2-like enzyme that catalyzes the conjugation of atg12 to atg5. atg12 conjugation to atg5 is required for autophagy. Likely serves as an atg5-recognition molecule. The chain is Ubiquitin-like-conjugating enzyme ATG10 (atg10) from Dictyostelium discoideum (Social amoeba).